The chain runs to 169 residues: Disulfide bond formation protein B (169 aa).

Over 1 to 13 the chain is Cytoplasmic; the sequence is MQSLISFAHSRLS. A helical transmembrane segment spans residues 14–30; the sequence is WGILALSALALESAALY. Over 31 to 48 the chain is Periplasmic; the sequence is FQHIMKLDPCVMCIYQRV. Cys40 and Cys43 are joined by a disulfide. A helical membrane pass occupies residues 49–64; the sequence is AVFGLLGAGLFGFMAP. The Cytoplasmic segment spans residues 65–71; the sequence is ANRVIRA. A helical transmembrane segment spans residues 72 to 89; that stretch reads LGALLWGISAAWGLKLAL. The Periplasmic segment spans residues 90-144; the sequence is ELVDMQNNPNPFSTCSFLPEFPSWLQLHEWLPSVFMPTGMCTDIPWEFAGVTMGE. The cysteines at positions 104 and 130 are disulfide-linked. A helical transmembrane segment spans residues 145 to 163; the sequence is WMIVAFSVYLLAWLAFIVP. At 164–169 the chain is on the cytoplasmic side; sequence MLKKSA.

Belongs to the DsbB family.

The protein localises to the cell inner membrane. Its function is as follows. Required for disulfide bond formation in some periplasmic proteins. Acts by oxidizing the DsbA protein. This Shewanella amazonensis (strain ATCC BAA-1098 / SB2B) protein is Disulfide bond formation protein B.